The primary structure comprises 309 residues: Aspartate carbamoyltransferase catalytic subunit (309 aa).

2 residues coordinate carbamoyl phosphate: Arg-57 and Thr-58. Lys-86 contributes to the L-aspartate binding site. Residues Arg-107, His-135, and Gln-138 each coordinate carbamoyl phosphate. The L-aspartate site is built by Arg-168 and Arg-229. 2 residues coordinate carbamoyl phosphate: Leu-269 and Pro-270.

It belongs to the aspartate/ornithine carbamoyltransferase superfamily. ATCase family. In terms of assembly, heterooligomer of catalytic and regulatory chains.

The enzyme catalyses carbamoyl phosphate + L-aspartate = N-carbamoyl-L-aspartate + phosphate + H(+). The protein operates within pyrimidine metabolism; UMP biosynthesis via de novo pathway; (S)-dihydroorotate from bicarbonate: step 2/3. Catalyzes the condensation of carbamoyl phosphate and aspartate to form carbamoyl aspartate and inorganic phosphate, the committed step in the de novo pyrimidine nucleotide biosynthesis pathway. The polypeptide is Aspartate carbamoyltransferase catalytic subunit (Methanopyrus kandleri (strain AV19 / DSM 6324 / JCM 9639 / NBRC 100938)).